The chain runs to 1288 residues: Structural maintenance of chromosomes protein 4 (1288 aa).

A compositionally biased stretch (polar residues) spans 1–10; that stretch reads MPRKGTQPST. The disordered stretch occupies residues 1-55; it reads MPRKGTQPSTARRREEGPPPPSPDGASSDAEPEPPSGRTESPATAAETASEELDN. Residues Ser22 and Ser28 each carry the phosphoserine modification. Thr39 carries the post-translational modification Phosphothreonine. Low complexity predominate over residues 39–48; that stretch reads TESPATAAET. Phosphoserine occurs at positions 41 and 50. 113–120 contacts ATP; the sequence is GPNGSGKS. At Ser143 the chain carries Phosphoserine. Residues 272-588 are a coiled coil; it reads RRVEILNEHR…LFQKVEEAKS (317 aa). An N6-acetyllysine mark is found at Lys381 and Lys679. The 115-residue stretch at 613 to 727 folds into the SMC hinge domain; the sequence is PGIYGRLGDL…ADNLDQATRV (115 aa). The stretch at 767 to 1020 forms a coiled coil; the sequence is LVIEISEEEV…ALSIKLKLEQ (254 aa). Phosphoserine occurs at positions 982 and 1056. Residues 1109–1129 are a coiled coil; the sequence is ELDKITYERDSFRQAYEDLRK.

This sequence belongs to the SMC family. SMC4 subfamily. Forms a heterodimer with SMC2. Component of the condensin complex, which contains the SMC2 and SMC4 heterodimer, and three non SMC subunits that probably regulate the complex: BRRN1/CAPH, CNAP1/CAPD2 and CAPG. As to expression, widely expressed. Higher expression in testis, colon, thymus.

It is found in the nucleus. The protein resides in the cytoplasm. Its subcellular location is the chromosome. In terms of biological role, central component of the condensin complex, a complex required for conversion of interphase chromatin into mitotic-like condense chromosomes. The condensin complex probably introduces positive supercoils into relaxed DNA in the presence of type I topoisomerases and converts nicked DNA into positive knotted forms in the presence of type II topoisomerases. The sequence is that of Structural maintenance of chromosomes protein 4 (SMC4) from Homo sapiens (Human).